Reading from the N-terminus, the 365-residue chain is 3-dehydroquinate synthase (365 aa).

NAD(+)-binding positions include 106-110 (GVIGD), 130-131 (TT), K142, K151, and 169-172 (FFAT). E184, H247, and H264 together coordinate Zn(2+).

The protein belongs to the sugar phosphate cyclases superfamily. Dehydroquinate synthase family. Co(2+) is required as a cofactor. It depends on Zn(2+) as a cofactor. NAD(+) serves as cofactor.

It is found in the cytoplasm. It catalyses the reaction 7-phospho-2-dehydro-3-deoxy-D-arabino-heptonate = 3-dehydroquinate + phosphate. It participates in metabolic intermediate biosynthesis; chorismate biosynthesis; chorismate from D-erythrose 4-phosphate and phosphoenolpyruvate: step 2/7. In terms of biological role, catalyzes the conversion of 3-deoxy-D-arabino-heptulosonate 7-phosphate (DAHP) to dehydroquinate (DHQ). This is 3-dehydroquinate synthase from Listeria welshimeri serovar 6b (strain ATCC 35897 / DSM 20650 / CCUG 15529 / CIP 8149 / NCTC 11857 / SLCC 5334 / V8).